A 393-amino-acid polypeptide reads, in one-letter code: Phospholipase A1-II 1 (393 aa).

Positions 200 to 220 form a coiled coil; that stretch reads QVLNEIKRLQDMYEHEETSIT. S225 (acyl-ester intermediate) is an active-site residue. Active-site charge relay system residues include S225, D284, and H321.

It belongs to the AB hydrolase superfamily. Lipase family.

The protein resides in the cytoplasm. Its function is as follows. Acylhydrolase that catalyzes the hydrolysis of phospholipids at the sn-1 position. This is Phospholipase A1-II 1 from Oryza sativa subsp. indica (Rice).